Consider the following 665-residue polypeptide: Ribonuclease R 2 (665 aa).

Residues 202–528 (REDYRNEITY…LIIHRLLHLY (327 aa)) enclose the RNB domain. One can recognise an S1 motif domain in the interval 579–662 (GEVYTGTITG…RKGTVDFEQI (84 aa)).

The protein belongs to the RNR ribonuclease family. RNase R subfamily.

The protein localises to the cytoplasm. It carries out the reaction Exonucleolytic cleavage in the 3'- to 5'-direction to yield nucleoside 5'-phosphates.. Its function is as follows. 3'-5' exoribonuclease that releases 5'-nucleoside monophosphates and is involved in maturation of structured RNAs. The chain is Ribonuclease R 2 from Lactococcus lactis subsp. lactis (strain IL1403) (Streptococcus lactis).